A 492-amino-acid polypeptide reads, in one-letter code: Catalase isozyme 1 (492 aa).

Catalysis depends on residues His65 and Asn138. Position 348 (Tyr348) interacts with heme.

The protein belongs to the catalase family. Homotetramer. Requires heme as cofactor.

The protein resides in the peroxisome. It carries out the reaction 2 H2O2 = O2 + 2 H2O. In terms of biological role, occurs in almost all aerobically respiring organisms and serves to protect cells from the toxic effects of hydrogen peroxide. The sequence is that of Catalase isozyme 1 (CAT1) from Gossypium hirsutum (Upland cotton).